We begin with the raw amino-acid sequence, 79 residues long: Mycoredoxin 1 (79 aa).

Residues 1 to 79 enclose the Glutaredoxin domain; that stretch reads MSNVTIYATD…EVIAKIEALA (79 aa).

The protein belongs to the glutaredoxin family.

Its subcellular location is the cytoplasm. It carries out the reaction [mycoredoxin]-L-cysteine + arseno-mycothiol + H(+) = [mycoredoxin]-S-mycothiol-L-cysteine + arsenite. Its function is as follows. Involved in defense against toxic arsenate. Involved in the mycothiol/myoredoxin redox pathway which uses a mycothioltransferase mechanism; functions as a monothiol mixed disulfide reductase and is recycled by a second mycothiol forming mycothione which in turn is reduced in a NADPH-dependent manner. This Corynebacterium glutamicum (strain ATCC 13032 / K051) protein is Mycoredoxin 1 (mrx1).